The following is a 618-amino-acid chain: MKQSKLLIPTLREMPSDAQVISHALMVRAGYVRQVSAGIYAYLPLANRTIEKFKTIMREEFEKIGAVEMLAPALLTADLWRESGRYETYGEDLYKLKNRDNSDFILGPTHEETFTTLVRDAVKSYKQLPLNLYQIQSKYRDEKRPRNGLLRTREFIMKDGYSFHHNYEDLDVTYEDYRQAYEAIFTRAGLDFKGIIGDGGAMGGKDSQEFMAITPARTDLDRWVVLDKSIASMDDIPKEVLEDIKAELAAWMISGEDTIAYSTESSYAANLEMATNEYKPSSKVAAEDALAEVETPHCKTIDEVAAFLSVDETQTIKTLLFVADNEPVVALLVGNDHINTVKLKNYLAADFLEPASEEEARAFFGAGFGSLGPVNLAQGSRIVADRKVQNLTNAVAGANKDGFHMTGVNPGRDFQAEYVDIREVKEGEMSPDGHGVLQFARGIEVGHIFKLGTRYSDSMGATILDENGRTVPIVMGCYGIGVSRILSAVIEQHARLFVNKTPKGDYRYAWGINFPKELAPFDVHLITVNVKDQVAQDLTAKLEADLMAKGYDVLTDDRNERVGSKFSDSDLIGLPIRVTVGKKAAEGIVEIKIKATGDSIEVNAENLIETLEILTKEH.

The protein belongs to the class-II aminoacyl-tRNA synthetase family. ProS type 1 subfamily. In terms of assembly, homodimer.

Its subcellular location is the cytoplasm. The catalysed reaction is tRNA(Pro) + L-proline + ATP = L-prolyl-tRNA(Pro) + AMP + diphosphate. In terms of biological role, catalyzes the attachment of proline to tRNA(Pro) in a two-step reaction: proline is first activated by ATP to form Pro-AMP and then transferred to the acceptor end of tRNA(Pro). As ProRS can inadvertently accommodate and process non-cognate amino acids such as alanine and cysteine, to avoid such errors it has two additional distinct editing activities against alanine. One activity is designated as 'pretransfer' editing and involves the tRNA(Pro)-independent hydrolysis of activated Ala-AMP. The other activity is designated 'posttransfer' editing and involves deacylation of mischarged Ala-tRNA(Pro). The misacylated Cys-tRNA(Pro) is not edited by ProRS. In Streptococcus pyogenes serotype M1, this protein is Proline--tRNA ligase.